The chain runs to 546 residues: Oncoprotein-induced transcript 3 protein (546 aa).

The signal sequence occupies residues 1–19 (MPLSLLLTCLSTTVTLVSP). Residues asparagine 89 and asparagine 116 are each glycosylated (N-linked (GlcNAc...) asparagine). An EGF-like; calcium-binding domain is found at 182 to 222 (DENECEHNNGGCSEICVNLKNSHRCACGVGRVLRSDGKTCE). 3 disulfide bridges follow: cysteine 186-cysteine 197, cysteine 193-cysteine 206, and cysteine 208-cysteine 221. One can recognise a ZP domain in the interval 261-516 (TCQVPVLCKS…SRCAQGCHRR (256 aa)). Asparagine 299 carries N-linked (GlcNAc...) asparagine glycosylation.

Liver-specific. Expressed only in the hepatocytes.

It localises to the nucleus envelope. May be involved in hepatocellular function and development. This is Oncoprotein-induced transcript 3 protein (Oit3) from Mus musculus (Mouse).